The primary structure comprises 458 residues: ATP synthase subunit beta (458 aa).

148–155 (GGAGVGKT) contributes to the ATP binding site.

It belongs to the ATPase alpha/beta chains family. F-type ATPases have 2 components, CF(1) - the catalytic core - and CF(0) - the membrane proton channel. CF(1) has five subunits: alpha(3), beta(3), gamma(1), delta(1), epsilon(1). CF(0) has three main subunits: a(1), b(2) and c(9-12). The alpha and beta chains form an alternating ring which encloses part of the gamma chain. CF(1) is attached to CF(0) by a central stalk formed by the gamma and epsilon chains, while a peripheral stalk is formed by the delta and b chains.

The protein localises to the cell inner membrane. It catalyses the reaction ATP + H2O + 4 H(+)(in) = ADP + phosphate + 5 H(+)(out). Its function is as follows. Produces ATP from ADP in the presence of a proton gradient across the membrane. The catalytic sites are hosted primarily by the beta subunits. This chain is ATP synthase subunit beta, found in Francisella philomiragia subsp. philomiragia (strain ATCC 25017 / CCUG 19701 / FSC 153 / O#319-036).